We begin with the raw amino-acid sequence, 248 residues long: DnaA regulatory inactivator Hda (248 aa).

This sequence belongs to the DnaA family. HdA subfamily. The active form seems to be an ADP-bound monomer. Forms the RIDA complex (regulatory inactivation of DnaA) of ATP-DnaA, ADP-Hda and the DNA-loaded beta sliding clamp (dnaN).

Functionally, mediates the interaction of DNA replication initiator protein DnaA with DNA polymerase subunit beta sliding clamp (dnaN). Stimulates hydrolysis of ATP-DnaA to ADP-DnaA, rendering DnaA inactive for reinitiation, a process called regulatory inhibition of DnaA or RIDA. This is DnaA regulatory inactivator Hda from Proteus mirabilis (strain HI4320).